The chain runs to 367 residues: 2-aminoethylphosphonate--pyruvate transaminase (367 aa).

N6-(pyridoxal phosphate)lysine is present on lysine 194.

Belongs to the class-V pyridoxal-phosphate-dependent aminotransferase family. PhnW subfamily. Homodimer. It depends on pyridoxal 5'-phosphate as a cofactor.

It carries out the reaction (2-aminoethyl)phosphonate + pyruvate = phosphonoacetaldehyde + L-alanine. Involved in phosphonate degradation. This Salmonella gallinarum (strain 287/91 / NCTC 13346) protein is 2-aminoethylphosphonate--pyruvate transaminase.